A 284-amino-acid polypeptide reads, in one-letter code: Phosphatidylglycerol--prolipoprotein diacylglyceryl transferase (284 aa).

A run of 7 helical transmembrane segments spans residues 18 to 38, 62 to 82, 106 to 126, 136 to 156, 190 to 210, 218 to 238, and 252 to 272; these read LGGI…VIAF, YFLW…VLIY, FVGI…IASY, LLIY…FGRI, PSQL…VLWA, GLLI…AEFY, and LSMG…ILLY. A 1,2-diacyl-sn-glycero-3-phospho-(1'-sn-glycerol) is bound at residue arginine 155.

This sequence belongs to the Lgt family.

The protein localises to the cell inner membrane. It carries out the reaction L-cysteinyl-[prolipoprotein] + a 1,2-diacyl-sn-glycero-3-phospho-(1'-sn-glycerol) = an S-1,2-diacyl-sn-glyceryl-L-cysteinyl-[prolipoprotein] + sn-glycerol 1-phosphate + H(+). Its pathway is protein modification; lipoprotein biosynthesis (diacylglyceryl transfer). Catalyzes the transfer of the diacylglyceryl group from phosphatidylglycerol to the sulfhydryl group of the N-terminal cysteine of a prolipoprotein, the first step in the formation of mature lipoproteins. In Helicobacter pylori (strain G27), this protein is Phosphatidylglycerol--prolipoprotein diacylglyceryl transferase.